The following is a 336-amino-acid chain: Adenylosuccinate synthetase (336 aa).

Residues 12 to 18 and 42 to 44 contribute to the GTP site; these read GDEGKGK and GHS. Aspartate 13 (proton acceptor) is an active-site residue. 2 residues coordinate Mg(2+): aspartate 13 and glycine 42. IMP is bound by residues 13 to 16, 40 to 43, threonine 127, arginine 141, glutamine 179, threonine 194, and arginine 256; these read DEGK and NAGH. The Proton donor role is filled by histidine 43. 252 to 258 serves as a coordination point for substrate; it reads TVTGRRR. Residues arginine 258, 284-286, and 324-326 each bind GTP; these read CLD and STG.

Belongs to the adenylosuccinate synthetase family. As to quaternary structure, homodimer. The cofactor is Mg(2+).

The protein localises to the cytoplasm. The enzyme catalyses IMP + L-aspartate + GTP = N(6)-(1,2-dicarboxyethyl)-AMP + GDP + phosphate + 2 H(+). The protein operates within purine metabolism; AMP biosynthesis via de novo pathway; AMP from IMP: step 1/2. In terms of biological role, plays an important role in the de novo pathway of purine nucleotide biosynthesis. Catalyzes the first committed step in the biosynthesis of AMP from IMP. This Methanococcus aeolicus (strain ATCC BAA-1280 / DSM 17508 / OCM 812 / Nankai-3) protein is Adenylosuccinate synthetase.